The sequence spans 907 residues: Probable dipeptidyl-aminopeptidase B (907 aa).

Over residues 1–26 (MPRQRAPKEEEAELLTKQERSTRSSE) the composition is skewed to basic and acidic residues. The tract at residues 1 to 70 (MPRQRAPKEE…EKYTDEDDEA (70 aa)) is disordered. At 1-93 (MPRQRAPKEE…PVAVDKKTRR (93 aa)) the chain is on the cytoplasmic side. The segment covering 30–44 (DASVSSISTTSLVLE) has biased composition (low complexity). A helical; Signal-anchor for type II membrane protein membrane pass occupies residues 94–114 (WLWIVGIACVTGWALALVFFL). At 115–907 (MSGSYKHVST…SQVDARLERR (793 aa)) the chain is on the vacuolar side. Residue Asn560 is glycosylated (N-linked (GlcNAc...) asparagine). Ser751 functions as the Charge relay system in the catalytic mechanism. Residue Asn805 is glycosylated (N-linked (GlcNAc...) asparagine). Catalysis depends on charge relay system residues Asp828 and His861.

This sequence belongs to the peptidase S9B family.

It localises to the vacuole membrane. The catalysed reaction is Release of an N-terminal dipeptide, Xaa-Yaa-|-Zaa-, from a polypeptide, preferentially when Yaa is Pro, provided Zaa is neither Pro nor hydroxyproline.. In terms of biological role, type IV dipeptidyl-peptidase which removes N-terminal dipeptides sequentially from polypeptides having unsubstituted N-termini provided that the penultimate residue is proline. The chain is Probable dipeptidyl-aminopeptidase B (dapB) from Pyrenophora teres f. teres (strain 0-1) (Barley net blotch fungus).